The sequence spans 536 residues: Mannuronan C5-epimerase (536 aa).

An N-terminal signal peptide occupies residues 1-36 (MNSHASNGRSRNWPHALLESALLTSALLMASSVALA). 5 PbH1 repeats span residues 298–320 (TRDF…DPHD), 322–345 (SHGL…IISR), 347–369 (VDNS…VLDR), 371–393 (SVGN…TLYE), and 394–416 (SGNN…RVRN). Catalysis depends on H319, which acts as the Proton acceptor.

This sequence belongs to the D-mannuronate C5-epimerase family.

The protein resides in the periplasm. It carries out the reaction [(1-&gt;4)-beta-D-mannuronosyl](n) = [alginate](n). It functions in the pathway glycan biosynthesis; alginate biosynthesis. Catalyzes the epimerization of beta-D-mannuronate to alpha-L-guluronate during the synthesis of the linear polysaccharide alginate. In addition, is part of a periplasmic protein complex that protects alginate from degradation by AlgL by channeling the newly formed alginate polymer through a scaffold that transfers the alginate polymer through the periplasmic space to the outer membrane secretin AlgE. The chain is Mannuronan C5-epimerase (algG) from Pseudomonas syringae pv. tomato (strain ATCC BAA-871 / DC3000).